A 391-amino-acid polypeptide reads, in one-letter code: Putative protein PLEKHA9 (391 aa).

This chain is Putative protein PLEKHA9 (PLEKHA8P1), found in Homo sapiens (Human).